Here is a 146-residue protein sequence, read N- to C-terminus: uncharacterized protein (146 aa).

This is an uncharacterized protein from Thermoproteus tenax virus 1 (strain KRA1) (TTV1).